Consider the following 98-residue polypeptide: Large ribosomal subunit protein uL23 (98 aa).

It belongs to the universal ribosomal protein uL23 family. As to quaternary structure, part of the 50S ribosomal subunit. Contacts protein L29, and trigger factor when it is bound to the ribosome.

Its function is as follows. One of the early assembly proteins it binds 23S rRNA. One of the proteins that surrounds the polypeptide exit tunnel on the outside of the ribosome. Forms the main docking site for trigger factor binding to the ribosome. The polypeptide is Large ribosomal subunit protein uL23 (Herpetosiphon aurantiacus (strain ATCC 23779 / DSM 785 / 114-95)).